The following is a 348-amino-acid chain: L-threonine 3-dehydrogenase (348 aa).

Cys-38 contributes to the Zn(2+) binding site. Catalysis depends on charge relay system residues Thr-40 and His-43. Zn(2+)-binding residues include His-63, Glu-64, Cys-93, Cys-96, Cys-99, and Cys-107. NAD(+) contacts are provided by residues Ile-175, Asp-195, Arg-200, 263–265 (LGI), and 287–288 (IY).

It belongs to the zinc-containing alcohol dehydrogenase family. As to quaternary structure, homotetramer. The cofactor is Zn(2+).

The protein resides in the cytoplasm. The enzyme catalyses L-threonine + NAD(+) = (2S)-2-amino-3-oxobutanoate + NADH + H(+). The protein operates within amino-acid degradation; L-threonine degradation via oxydo-reductase pathway; glycine from L-threonine: step 1/2. In terms of biological role, catalyzes the NAD(+)-dependent oxidation of L-threonine to 2-amino-3-ketobutyrate. This is L-threonine 3-dehydrogenase from Deinococcus radiodurans (strain ATCC 13939 / DSM 20539 / JCM 16871 / CCUG 27074 / LMG 4051 / NBRC 15346 / NCIMB 9279 / VKM B-1422 / R1).